Reading from the N-terminus, the 460-residue chain is tRNA modification GTPase MnmE (460 aa).

Arg29, Glu91, and Lys132 together coordinate (6S)-5-formyl-5,6,7,8-tetrahydrofolate. A TrmE-type G domain is found at 227–383 (GISIALIGKT…LIDTIIKKCG (157 aa)). Position 237 (Asn237) interacts with K(+). GTP is bound by residues 237-242 (NVGKSS), 256-262 (TNIPGTT), and 281-284 (DTAG). A Mg(2+)-binding site is contributed by Ser241. K(+)-binding residues include Thr256, Ile258, and Thr261. Thr262 is a binding site for Mg(2+). Residue Lys460 participates in (6S)-5-formyl-5,6,7,8-tetrahydrofolate binding.

This sequence belongs to the TRAFAC class TrmE-Era-EngA-EngB-Septin-like GTPase superfamily. TrmE GTPase family. In terms of assembly, homodimer. Heterotetramer of two MnmE and two MnmG subunits. It depends on K(+) as a cofactor.

Its subcellular location is the cytoplasm. In terms of biological role, exhibits a very high intrinsic GTPase hydrolysis rate. Involved in the addition of a carboxymethylaminomethyl (cmnm) group at the wobble position (U34) of certain tRNAs, forming tRNA-cmnm(5)s(2)U34. This chain is tRNA modification GTPase MnmE, found in Prochlorococcus marinus (strain MIT 9301).